The following is a 166-amino-acid chain: Cyclin-dependent kinase 4 inhibitor D (166 aa).

Met1 is subject to N-acetylmethionine. ANK repeat units lie at residues 41–69, 73–102, 106–135, and 138–166; these read FGKTALQVMMFGSPTIALELLKQGASPNV, SGTTPAHDAARTGFLDTLKVLVEHGADVNA, TGALPIHLAVREGHTSVVSFLATESDLHHR, and TGLTPLELARGRGAQELMDILQRHTVAPL.

This sequence belongs to the CDKN2 cyclin-dependent kinase inhibitor family. Interacts with CDK6.

The protein localises to the nucleus. It is found in the cytoplasm. In terms of biological role, interacts strongly with CDK4 and CDK6 and inhibits them. The polypeptide is Cyclin-dependent kinase 4 inhibitor D (CDKN2D) (Bos taurus (Bovine)).